Reading from the N-terminus, the 249-residue chain is NAD(P)H-quinone oxidoreductase subunit T, chloroplastic (249 aa).

The transit peptide at 1 to 45 (MAYATSTYARTSCIILPKIQNGAHFTDDTKAFRRITARRVTRIYA) directs the protein to the chloroplast. The tract at residues 44 to 84 (YASQGPTKPSKPSPGVDTRIHWESPDEGWIGGRSDPAKSVD) is disordered. In terms of domain architecture, J spans 106–172 (SHYQFLGVST…ETRRFYDWTL (67 aa)). A helical transmembrane segment spans residues 224–244 (LTFDILIVLFAVCCIAFVIVF).

As to quaternary structure, part of the chloroplast NDH complex, composed of a mixture of chloroplast and nucleus encoded subunits. Component of the electron donor-binding subcomplex, at least composed of NDHS, NDHT and NDHU.

The protein localises to the plastid. Its subcellular location is the chloroplast thylakoid membrane. The catalysed reaction is a plastoquinone + NADH + (n+1) H(+)(in) = a plastoquinol + NAD(+) + n H(+)(out). It carries out the reaction a plastoquinone + NADPH + (n+1) H(+)(in) = a plastoquinol + NADP(+) + n H(+)(out). Functionally, NDH shuttles electrons from NAD(P)H:plastoquinone, via FMN and iron-sulfur (Fe-S) centers, to quinones in the photosynthetic chain and possibly in a chloroplast respiratory chain. The immediate electron acceptor for the enzyme in this species is believed to be plastoquinone. Couples the redox reaction to proton translocation, and thus conserves the redox energy in a proton gradient. Required for the accumulation of both the NDH subcomplex A and NDHS. This Arabidopsis thaliana (Mouse-ear cress) protein is NAD(P)H-quinone oxidoreductase subunit T, chloroplastic.